The chain runs to 462 residues: Probable protein phosphatase 2C 1 (462 aa).

The PPM-type phosphatase domain maps to 60-362 (SSCIFTQQGR…DDCAVVCLFL (303 aa)). 4 residues coordinate Mn(2+): aspartate 95, glycine 96, aspartate 307, and aspartate 353. 2 disordered regions span residues 369-394 (ETSDNEEQCFSSATNAVESDESQGAE) and 421-443 (EADNAEKEKTREGEQNWSGLEGV). Over residues 376-385 (QCFSSATNAV) the composition is skewed to polar residues. Basic and acidic residues predominate over residues 424 to 434 (NAEKEKTREGE).

This sequence belongs to the PP2C family. In terms of assembly, interacts with GCN5. Mg(2+) is required as a cofactor. It depends on Mn(2+) as a cofactor.

The catalysed reaction is O-phospho-L-seryl-[protein] + H2O = L-seryl-[protein] + phosphate. It catalyses the reaction O-phospho-L-threonyl-[protein] + H2O = L-threonyl-[protein] + phosphate. Functionally, may act as negative regulator of GCN5. This chain is Probable protein phosphatase 2C 1 (PPC6-6), found in Arabidopsis thaliana (Mouse-ear cress).